A 419-amino-acid polypeptide reads, in one-letter code: Bilin biosynthesis protein CpeY (419 aa).

In terms of biological role, involved in the biosynthesis of bilin. This chain is Bilin biosynthesis protein CpeY (cpeY), found in Synechococcus sp. (strain WH8020).